Here is a 271-residue protein sequence, read N- to C-terminus: MSDVQKSRDTRNIPISKVGVKDISYPIVIMDKNKSIQHTVARINMYVDLPHHFKGTHMSRFIEILNVYREKIALDNMEAMLQRMKEKLGAGSAHVEIEFPYFIEKKAPASGAKSLMEYTCEFSASLSSEFDFILGIKVPVTSLCPCSKELSHYGAHNQRSIMTVRVRYREFVWIEDLIEIVEGCGSSPVYSLLKREDEKFVTEKAYENPKFVEDMVREATQKLLAMEKITWFSVEAENFESIHNHSAYAAIERDKREKGVDNPVDKPGNCG.

It belongs to the GTP cyclohydrolase IV family.

It catalyses the reaction GTP + H2O = 7,8-dihydroneopterin 3'-triphosphate + formate + H(+). It participates in cofactor biosynthesis; 7,8-dihydroneopterin triphosphate biosynthesis; 7,8-dihydroneopterin triphosphate from GTP: step 1/1. Its function is as follows. Converts GTP to 7,8-dihydroneopterin triphosphate. This chain is GTP cyclohydrolase FolE2, found in Geotalea uraniireducens (strain Rf4) (Geobacter uraniireducens).